Here is a 174-residue protein sequence, read N- to C-terminus: NADH-ubiquinone oxidoreductase chain 6 (174 aa).

4 consecutive transmembrane segments (helical) span residues 25–45, 48–68, 82–102, and 143–163; these read SMGL…GIYV, FWFS…LFIY, FKLT…FFIL, and LITL…VKIT.

The protein belongs to the complex I subunit 6 family.

Its subcellular location is the mitochondrion membrane. The catalysed reaction is a ubiquinone + NADH + 5 H(+)(in) = a ubiquinol + NAD(+) + 4 H(+)(out). In terms of biological role, core subunit of the mitochondrial membrane respiratory chain NADH dehydrogenase (Complex I) that is believed to belong to the minimal assembly required for catalysis. Complex I functions in the transfer of electrons from NADH to the respiratory chain. The immediate electron acceptor for the enzyme is believed to be ubiquinone. In Anopheles gambiae (African malaria mosquito), this protein is NADH-ubiquinone oxidoreductase chain 6 (mt:ND6).